A 136-amino-acid polypeptide reads, in one-letter code: Putative pre-16S rRNA nuclease (136 aa).

It belongs to the YqgF nuclease family.

Its subcellular location is the cytoplasm. Functionally, could be a nuclease involved in processing of the 5'-end of pre-16S rRNA. This is Putative pre-16S rRNA nuclease from Francisella tularensis subsp. holarctica (strain FTNF002-00 / FTA).